The chain runs to 102 residues: Large ribosomal subunit protein uL24 (102 aa).

Belongs to the universal ribosomal protein uL24 family. In terms of assembly, part of the 50S ribosomal subunit.

One of two assembly initiator proteins, it binds directly to the 5'-end of the 23S rRNA, where it nucleates assembly of the 50S subunit. In terms of biological role, one of the proteins that surrounds the polypeptide exit tunnel on the outside of the subunit. This chain is Large ribosomal subunit protein uL24, found in Ralstonia pickettii (strain 12J).